Here is a 363-residue protein sequence, read N- to C-terminus: MIIDTTELQAINSFFKLESLKEVYGIIWILIPIFTLVLGITIGVLVIVWLEREISAGIQQRIGPEYAGPLGILQALADGTKLLFKENLLPSRGDARLFSIGPSIAVISILLSYSVIPFGYRLVLADLTIGVFLWIAISSIAPIGLLMSGYGSNNKYSFLGGLRAAAQSISYEIPLTLCVLSISLLSNSSSTVDIVEAQSKYGFWGWNLWRQPIGFIIFLISSLAECERLPFDLPEAEEELVAGYQTEYSGIKFGLFYVASYLNLLVSSLFVTVLYLGGWNLSIPYIFVSEIFDINKAGKVFGPVIGIFITLAKTYLFLFIPIATRWTLPRLRMDQLLNLGWKFLLPISLGNLLLTTSSQLLSL.

Helical transmembrane passes span 26 to 46 (IIWI…GVLV), 98 to 118 (FSIG…VIPF), 127 to 147 (LTIG…GLLM), 246 to 266 (TEYS…NLLV), 268 to 288 (SLFV…YIFV), 300 to 320 (VFGP…FLFI), and 336 to 356 (LLNL…LLTT).

This sequence belongs to the complex I subunit 1 family. In terms of assembly, NDH is composed of at least 16 different subunits, 5 of which are encoded in the nucleus.

Its subcellular location is the plastid. It is found in the chloroplast thylakoid membrane. The catalysed reaction is a plastoquinone + NADH + (n+1) H(+)(in) = a plastoquinol + NAD(+) + n H(+)(out). It catalyses the reaction a plastoquinone + NADPH + (n+1) H(+)(in) = a plastoquinol + NADP(+) + n H(+)(out). Its function is as follows. NDH shuttles electrons from NAD(P)H:plastoquinone, via FMN and iron-sulfur (Fe-S) centers, to quinones in the photosynthetic chain and possibly in a chloroplast respiratory chain. The immediate electron acceptor for the enzyme in this species is believed to be plastoquinone. Couples the redox reaction to proton translocation, and thus conserves the redox energy in a proton gradient. This is NAD(P)H-quinone oxidoreductase subunit 1, chloroplastic from Coffea arabica (Arabian coffee).